A 292-amino-acid polypeptide reads, in one-letter code: 4-hydroxy-tetrahydrodipicolinate synthase (292 aa).

Position 45 (Thr45) interacts with pyruvate. Residue Tyr133 is the Proton donor/acceptor of the active site. Lys161 serves as the catalytic Schiff-base intermediate with substrate. Ile203 provides a ligand contact to pyruvate.

It belongs to the DapA family. As to quaternary structure, homotetramer; dimer of dimers.

It localises to the cytoplasm. It catalyses the reaction L-aspartate 4-semialdehyde + pyruvate = (2S,4S)-4-hydroxy-2,3,4,5-tetrahydrodipicolinate + H2O + H(+). It functions in the pathway amino-acid biosynthesis; L-lysine biosynthesis via DAP pathway; (S)-tetrahydrodipicolinate from L-aspartate: step 3/4. In terms of biological role, catalyzes the condensation of (S)-aspartate-beta-semialdehyde [(S)-ASA] and pyruvate to 4-hydroxy-tetrahydrodipicolinate (HTPA). The polypeptide is 4-hydroxy-tetrahydrodipicolinate synthase (Vibrio cholerae serotype O1 (strain M66-2)).